The chain runs to 444 residues: Methylenetetrahydrofolate--tRNA-(uracil-5-)-methyltransferase TrmFO (444 aa).

An FAD-binding site is contributed by 9 to 14 (GAGMAG).

This sequence belongs to the MnmG family. TrmFO subfamily. The cofactor is FAD.

The protein resides in the cytoplasm. It catalyses the reaction uridine(54) in tRNA + (6R)-5,10-methylene-5,6,7,8-tetrahydrofolate + NADH + H(+) = 5-methyluridine(54) in tRNA + (6S)-5,6,7,8-tetrahydrofolate + NAD(+). It carries out the reaction uridine(54) in tRNA + (6R)-5,10-methylene-5,6,7,8-tetrahydrofolate + NADPH + H(+) = 5-methyluridine(54) in tRNA + (6S)-5,6,7,8-tetrahydrofolate + NADP(+). In terms of biological role, catalyzes the folate-dependent formation of 5-methyl-uridine at position 54 (M-5-U54) in all tRNAs. This chain is Methylenetetrahydrofolate--tRNA-(uracil-5-)-methyltransferase TrmFO, found in Cereibacter sphaeroides (strain ATCC 17029 / ATH 2.4.9) (Rhodobacter sphaeroides).